Consider the following 251-residue polypeptide: Cell division protein ZapD (251 aa).

It belongs to the ZapD family. Interacts with FtsZ.

Its subcellular location is the cytoplasm. Cell division factor that enhances FtsZ-ring assembly. Directly interacts with FtsZ and promotes bundling of FtsZ protofilaments, with a reduction in FtsZ GTPase activity. This chain is Cell division protein ZapD, found in Paraburkholderia xenovorans (strain LB400).